The sequence spans 319 residues: Thioredoxin reductase (319 aa).

An FAD-binding site is contributed by 37-44 (ERGVPGGQ). Cysteine 136 and cysteine 139 are disulfide-bonded. 279–288 (DVRAKSLRQI) serves as a coordination point for FAD.

The protein belongs to the class-II pyridine nucleotide-disulfide oxidoreductase family. As to quaternary structure, homodimer. Requires FAD as cofactor.

It is found in the cytoplasm. It carries out the reaction [thioredoxin]-dithiol + NADP(+) = [thioredoxin]-disulfide + NADPH + H(+). The sequence is that of Thioredoxin reductase (trxB) from Listeria monocytogenes serovar 1/2a (strain ATCC BAA-679 / EGD-e).